A 1059-amino-acid chain; its full sequence is Isoleucine--tRNA ligase (1059 aa).

The short motif at 47-57 is the 'HIGH' region element; it reads PYTTGHIHLGT. The short motif at 591–595 is the 'KMSKS' region element; sequence KMSKS. ATP is bound at residue K594.

Belongs to the class-I aminoacyl-tRNA synthetase family. IleS type 2 subfamily. As to quaternary structure, monomer. Zn(2+) is required as a cofactor.

Its subcellular location is the cytoplasm. It carries out the reaction tRNA(Ile) + L-isoleucine + ATP = L-isoleucyl-tRNA(Ile) + AMP + diphosphate. Its function is as follows. Catalyzes the attachment of isoleucine to tRNA(Ile). As IleRS can inadvertently accommodate and process structurally similar amino acids such as valine, to avoid such errors it has two additional distinct tRNA(Ile)-dependent editing activities. One activity is designated as 'pretransfer' editing and involves the hydrolysis of activated Val-AMP. The other activity is designated 'posttransfer' editing and involves deacylation of mischarged Val-tRNA(Ile). This chain is Isoleucine--tRNA ligase, found in Methanoculleus marisnigri (strain ATCC 35101 / DSM 1498 / JR1).